Consider the following 550-residue polypeptide: Cochlin (550 aa).

The N-terminal stretch at 1 to 24 (MSAAWIPALGLGVCLLLLPGPAGS) is a signal peptide. In terms of domain architecture, LCCL spans 28-121 (APIAITCFTR…QMLSRWSASF (94 aa)). 2 cysteine pairs are disulfide-bonded: cysteine 34-cysteine 50 and cysteine 54-cysteine 74. Asparagine 100 is a glycosylation site (N-linked (GlcNAc...) asparagine). The span at 128-139 (SSTQEATGQAVS) shows a compositional bias: polar residues. The segment at 128 to 159 (SSTQEATGQAVSTAHPPTGKRLKKTPEKKTGN) is disordered. VWFA domains lie at 165–346 (DIAF…VKPL) and 367–537 (NIAF…VSDV). Asparagine 221 carries an N-linked (GlcNAc...) asparagine glycan.

As to quaternary structure, monomer. May form homodimer. Interacts with type II collagen. Interacts with SLC44A2. Interacts with ANXA2. N-glycosylated. In terms of processing, a 50 kDa form is created by proteolytic cleavage. In terms of tissue distribution, expressed in inner ear structures; the cochlea and the vestibule.

Its subcellular location is the secreted. The protein resides in the extracellular space. The protein localises to the extracellular matrix. Functionally, plays a role in the control of cell shape and motility in the trabecular meshwork. The chain is Cochlin (COCH) from Homo sapiens (Human).